Consider the following 259-residue polypeptide: Global transcriptional regulator CodY (259 aa).

The segment at 1-155 (MNLLEKTRQL…SATVVGMEIL (155 aa)) is GAF domain. A DNA-binding region (H-T-H motif) is located at residues 203-222 (ASKIADRVGITRSVIVNALR).

Belongs to the CodY family.

It is found in the cytoplasm. In terms of biological role, DNA-binding global transcriptional regulator which is involved in the adaptive response to starvation and acts by directly or indirectly controlling the expression of numerous genes in response to nutrient availability. During rapid exponential growth, CodY is highly active and represses genes whose products allow adaptation to nutrient depletion. The protein is Global transcriptional regulator CodY of Exiguobacterium sp. (strain ATCC BAA-1283 / AT1b).